The chain runs to 607 residues: Sulfite reductase [NADPH] flavoprotein alpha-component (607 aa).

The 139-residue stretch at 66–204 folds into the Flavodoxin-like domain; sequence VTILYGSQTG…AAGQWHADVL (139 aa). Residues 72–77, 119–122, and 155–164 contribute to the FMN site; these read SQTGNG, STHG, and LGDSSYEFFC. Residues 239 to 456 form the FAD-binding FR-type domain; the sequence is QNPYRAEVLV…VEPNKHFRLP (218 aa). FAD-binding positions include Thr-327, Leu-361, 395-398, 413-415, and 428-431; these read RLYS, TVA, and GGAS. NADP(+) contacts are provided by residues 527-528, 533-537, and Asp-569; these read SR and KIYVQ. Residue Tyr-607 coordinates FAD.

The protein belongs to the NADPH-dependent sulphite reductase flavoprotein subunit CysJ family. It in the N-terminal section; belongs to the flavodoxin family. This sequence in the C-terminal section; belongs to the flavoprotein pyridine nucleotide cytochrome reductase family. In terms of assembly, alpha(8)-beta(8). The alpha component is a flavoprotein, the beta component is a hemoprotein. It depends on FAD as a cofactor. FMN serves as cofactor.

It carries out the reaction hydrogen sulfide + 3 NADP(+) + 3 H2O = sulfite + 3 NADPH + 4 H(+). Its pathway is sulfur metabolism; hydrogen sulfide biosynthesis; hydrogen sulfide from sulfite (NADPH route): step 1/1. Functionally, component of the sulfite reductase complex that catalyzes the 6-electron reduction of sulfite to sulfide. This is one of several activities required for the biosynthesis of L-cysteine from sulfate. The flavoprotein component catalyzes the electron flow from NADPH -&gt; FAD -&gt; FMN to the hemoprotein component. The polypeptide is Sulfite reductase [NADPH] flavoprotein alpha-component (Shewanella oneidensis (strain ATCC 700550 / JCM 31522 / CIP 106686 / LMG 19005 / NCIMB 14063 / MR-1)).